A 435-amino-acid chain; its full sequence is Methylenetetrahydrofolate--tRNA-(uracil-5-)-methyltransferase TrmFO (435 aa).

9–14 contacts FAD; sequence GGGLAG.

Belongs to the MnmG family. TrmFO subfamily. FAD is required as a cofactor.

It is found in the cytoplasm. The enzyme catalyses uridine(54) in tRNA + (6R)-5,10-methylene-5,6,7,8-tetrahydrofolate + NADH + H(+) = 5-methyluridine(54) in tRNA + (6S)-5,6,7,8-tetrahydrofolate + NAD(+). It carries out the reaction uridine(54) in tRNA + (6R)-5,10-methylene-5,6,7,8-tetrahydrofolate + NADPH + H(+) = 5-methyluridine(54) in tRNA + (6S)-5,6,7,8-tetrahydrofolate + NADP(+). In terms of biological role, catalyzes the folate-dependent formation of 5-methyl-uridine at position 54 (M-5-U54) in all tRNAs. The chain is Methylenetetrahydrofolate--tRNA-(uracil-5-)-methyltransferase TrmFO from Geobacter sp. (strain M21).